A 197-amino-acid chain; its full sequence is MSITIKLLVGLANPGPEYAQTRHNAGQWYVSQLASQENIQLKAEPKFYGLTGRIQFAGNDLRLLVPTTFMNLSGKAVAAMANFYRIKPEEILIAHDELDLLPGIAKFKLGGGHGGHNGLKDIIQKLGNDKNFYRLRIGIGHPGDKNRVSGYVLGKAPSSEQNLIDQSIDEAARCTHILGQDGLEKAMNRLHSFKAEK.

Tyrosine 18 contacts tRNA. The active-site Proton acceptor is the histidine 23. Positions 69, 71, and 117 each coordinate tRNA.

It belongs to the PTH family. Monomer.

Its subcellular location is the cytoplasm. The enzyme catalyses an N-acyl-L-alpha-aminoacyl-tRNA + H2O = an N-acyl-L-amino acid + a tRNA + H(+). Its function is as follows. Hydrolyzes ribosome-free peptidyl-tRNAs (with 1 or more amino acids incorporated), which drop off the ribosome during protein synthesis, or as a result of ribosome stalling. Functionally, catalyzes the release of premature peptidyl moieties from peptidyl-tRNA molecules trapped in stalled 50S ribosomal subunits, and thus maintains levels of free tRNAs and 50S ribosomes. The chain is Peptidyl-tRNA hydrolase from Psychromonas ingrahamii (strain DSM 17664 / CCUG 51855 / 37).